A 169-amino-acid polypeptide reads, in one-letter code: Cell division inhibitor SulA (169 aa).

A ftsZ binding region spans residues 106–112 (ALRTGNY). Positions 162 to 169 (KIHSNLYH) are lon protease binding.

The protein belongs to the SulA family. Interacts with FtsZ. Is rapidly cleaved and degraded by the Lon protease once DNA damage is repaired.

In terms of biological role, component of the SOS system and an inhibitor of cell division. Accumulation of SulA causes rapid cessation of cell division and the appearance of long, non-septate filaments. In the presence of GTP, binds a polymerization-competent form of FtsZ in a 1:1 ratio, thus inhibiting FtsZ polymerization and therefore preventing it from participating in the assembly of the Z ring. This mechanism prevents the premature segregation of damaged DNA to daughter cells during cell division. This Citrobacter koseri (strain ATCC BAA-895 / CDC 4225-83 / SGSC4696) protein is Cell division inhibitor SulA.